The chain runs to 701 residues: Polyribonucleotide nucleotidyltransferase (701 aa).

The Mg(2+) site is built by aspartate 485 and aspartate 491. Residues 552–611 (PKIFKTTVDPEKIRDIIGPGGKMINKIIAETNVKIDIEPDGRIFVAAPDDISGNRAISMI) enclose the KH domain. The region spanning 621–689 (GQFFLGKVTR…KLGRLSLSRK (69 aa)) is the S1 motif domain.

The protein belongs to the polyribonucleotide nucleotidyltransferase family. The cofactor is Mg(2+).

The protein localises to the cytoplasm. The catalysed reaction is RNA(n+1) + phosphate = RNA(n) + a ribonucleoside 5'-diphosphate. Involved in mRNA degradation. Catalyzes the phosphorolysis of single-stranded polyribonucleotides processively in the 3'- to 5'-direction. The chain is Polyribonucleotide nucleotidyltransferase from Caldicellulosiruptor bescii (strain ATCC BAA-1888 / DSM 6725 / KCTC 15123 / Z-1320) (Anaerocellum thermophilum).